A 476-amino-acid chain; its full sequence is Cytochrome c oxidase subunit 1 (476 aa).

Residues 19–39 (LYYLWFSFLFGTYGFLLSVIL) form a helical membrane-spanning segment. Glu42 contributes to the Ca(2+) binding site. A run of 8 helical transmembrane segments spans residues 61–81 (MIFT…GLFG), 105–125 (ISLL…AAEF), 144–164 (LSPV…IASI), 194–214 (IIIT…GVLM), 240–260 (LFWF…FGVI), 278–298 (MILA…HHMY), 309–329 (FFTS…FNWL), and 345–365 (LLCL…VILG). His66 is a Fe(II)-heme a binding site. His246 is a Cu cation binding site. Positions 246–250 (HPEVY) form a cross-link, 1'-histidyl-3'-tyrosine (His-Tyr). Tyr250 contributes to the O2 binding site. Residues His295 and His296 each coordinate Cu cation. Positions 374 and 375 each coordinate Mg(2+). 2 helical membrane-spanning segments follow: residues 379–399 (VIAH…FTCV) and 415–435 (TLIV…FLPM). His382 is a binding site for heme a3. His384 is a Fe(II)-heme a binding site. Pro448 lines the Ca(2+) pocket. The chain crosses the membrane as a helical span at residues 455-475 (NGWNMICSIGSTMTLFGLLIF).

The protein belongs to the heme-copper respiratory oxidase family. As to quaternary structure, component of the cytochrome c oxidase (complex IV, CIV), a multisubunit enzyme composed of a catalytic core of 3 subunits and several supernumerary subunits. The complex exists as a monomer or a dimer and forms supercomplexes (SCs) in the inner mitochondrial membrane with ubiquinol-cytochrome c oxidoreductase (cytochrome b-c1 complex, complex III, CIII). Heme serves as cofactor. It depends on Cu cation as a cofactor.

It is found in the mitochondrion inner membrane. It catalyses the reaction 4 Fe(II)-[cytochrome c] + O2 + 8 H(+)(in) = 4 Fe(III)-[cytochrome c] + 2 H2O + 4 H(+)(out). It participates in energy metabolism; oxidative phosphorylation. In terms of biological role, component of the cytochrome c oxidase, the last enzyme in the mitochondrial electron transport chain which drives oxidative phosphorylation. The respiratory chain contains 3 multisubunit complexes succinate dehydrogenase (complex II, CII), ubiquinol-cytochrome c oxidoreductase (cytochrome b-c1 complex, complex III, CIII) and cytochrome c oxidase (complex IV, CIV), that cooperate to transfer electrons derived from NADH and succinate to molecular oxygen, creating an electrochemical gradient over the inner membrane that drives transmembrane transport and the ATP synthase. Cytochrome c oxidase is the component of the respiratory chain that catalyzes the reduction of oxygen to water. Electrons originating from reduced cytochrome c in the intermembrane space (IMS) are transferred via the dinuclear copper A center (CU(A)) of subunit 2 and heme A of subunit 1 to the active site in subunit 1, a binuclear center (BNC) formed by heme A3 and copper B (CU(B)). The BNC reduces molecular oxygen to 2 water molecules using 4 electrons from cytochrome c in the IMS and 4 protons from the mitochondrial matrix. The protein is Cytochrome c oxidase subunit 1 (COI) of Plasmodium berghei.